Reading from the N-terminus, the 850-residue chain is Lon protease (850 aa).

The Lon N-terminal domain maps to 38-232 (LPVLPLRDVV…LLVGLVDGEI (195 aa)). 384-391 (GPPGVGKT) contacts ATP. A Lon proteolytic domain is found at 634-815 (ENEIGLVTGL…DEVLDLALER (182 aa)). Residues S721 and K764 contribute to the active site. Residues 819 to 850 (PKKAGKEKARKTAPRVAVRGKSRSTPGTRVKH) are disordered. The segment covering 821 to 840 (KAGKEKARKTAPRVAVRGKS) has biased composition (basic residues). The segment covering 841–850 (RSTPGTRVKH) has biased composition (polar residues).

Belongs to the peptidase S16 family. As to quaternary structure, homohexamer. Organized in a ring with a central cavity.

The protein resides in the cytoplasm. The catalysed reaction is Hydrolysis of proteins in presence of ATP.. In terms of biological role, ATP-dependent serine protease that mediates the selective degradation of mutant and abnormal proteins as well as certain short-lived regulatory proteins. Required for cellular homeostasis and for survival from DNA damage and developmental changes induced by stress. Degrades polypeptides processively to yield small peptide fragments that are 5 to 10 amino acids long. Binds to DNA in a double-stranded, site-specific manner. This chain is Lon protease, found in Xanthomonas oryzae pv. oryzae (strain KACC10331 / KXO85).